The chain runs to 186 residues: UPF0301 protein Swit_2673 (186 aa).

It belongs to the UPF0301 (AlgH) family.

This is UPF0301 protein Swit_2673 from Rhizorhabdus wittichii (strain DSM 6014 / CCUG 31198 / JCM 15750 / NBRC 105917 / EY 4224 / RW1) (Sphingomonas wittichii).